We begin with the raw amino-acid sequence, 437 residues long: Trigger factor (437 aa).

Positions 163–248 constitute a PPIase FKBP-type domain; sequence DDRVTVDFEG…VKKIEASHLP (86 aa).

This sequence belongs to the FKBP-type PPIase family. Tig subfamily.

It localises to the cytoplasm. The catalysed reaction is [protein]-peptidylproline (omega=180) = [protein]-peptidylproline (omega=0). Its function is as follows. Involved in protein export. Acts as a chaperone by maintaining the newly synthesized protein in an open conformation. Functions as a peptidyl-prolyl cis-trans isomerase. This chain is Trigger factor, found in Variovorax paradoxus (strain S110).